Here is a 217-residue protein sequence, read N- to C-terminus: Imidazole glycerol phosphate synthase subunit HisH (217 aa).

A Glutamine amidotransferase type-1 domain is found at 3-217 (TIAIVDYGMG…IYRNFVHWKP (215 aa)). C82 functions as the Nucleophile in the catalytic mechanism. Residues H197 and E199 contribute to the active site.

Heterodimer of HisH and HisF.

It is found in the cytoplasm. The enzyme catalyses 5-[(5-phospho-1-deoxy-D-ribulos-1-ylimino)methylamino]-1-(5-phospho-beta-D-ribosyl)imidazole-4-carboxamide + L-glutamine = D-erythro-1-(imidazol-4-yl)glycerol 3-phosphate + 5-amino-1-(5-phospho-beta-D-ribosyl)imidazole-4-carboxamide + L-glutamate + H(+). It carries out the reaction L-glutamine + H2O = L-glutamate + NH4(+). It functions in the pathway amino-acid biosynthesis; L-histidine biosynthesis; L-histidine from 5-phospho-alpha-D-ribose 1-diphosphate: step 5/9. Functionally, IGPS catalyzes the conversion of PRFAR and glutamine to IGP, AICAR and glutamate. The HisH subunit catalyzes the hydrolysis of glutamine to glutamate and ammonia as part of the synthesis of IGP and AICAR. The resulting ammonia molecule is channeled to the active site of HisF. The chain is Imidazole glycerol phosphate synthase subunit HisH from Ralstonia nicotianae (strain ATCC BAA-1114 / GMI1000) (Ralstonia solanacearum).